A 464-amino-acid chain; its full sequence is MCREDWSASIRRRPVRQAVTSDPRARRIRRALLARGSWSETNRVTEILRKETVGGIILLVAAAAALIWANSPWSQSYFALRDFELGGEWLGLHLNLTLGAWAADGLLAIFFLVVGLELKREFVAGDLRDPSRAALPIAAAVGGMVVPALIFVLVNLNTGDGALRGWAIPTATDIAFAVAVLAVISTHLPSALRTFLLTLAVVDDLLAITVIAVFYTDDIKAWALALAVVPLALFTVCAQRGVQKWWLLVPLSVATWVLVHESGVHATVAGVLLGFAVPVHRSATRRGQQVDHAERVGMAEYFEHRVRPISAGIAIPVFAFFAAGVSIGGLSGLSRALGDPITLGIVLGLVAGKPIGILVTTRVLSAVTRASLDSSLRWVDVLGMSMLAGIGFTVSLLIGDLAFGMGSERDEFVKIGVLSGSLLAASLAAIVLLTRNRAYRRIHREETADDDHDGVPDVYQTRQD.

A run of 11 helical transmembrane segments spans residues 53–73 (VGGIILLVAAAAALIWANSPW), 96–116 (LTLGAWAADGLLAIFFLVVGL), 134–154 (ALPIAAAVGGMVVPALIFVLV), 165–185 (GWAIPTATDIAFAVAVLAVIS), 195–215 (FLLTLAVVDDLLAITVIAVFY), 219–239 (IKAWALALAVVPLALFTVCAQ), 257–277 (VLVHESGVHATVAGVLLGFAV), 313–333 (IAIPVFAFFAAGVSIGGLSGL), 340–360 (PITLGIVLGLVAGKPIGILVT), 378–398 (WVDVLGMSMLAGIGFTVSLLI), and 412–432 (FVKIGVLSGSLLAASLAAIVL).

Belongs to the NhaA Na(+)/H(+) (TC 2.A.33) antiporter family.

It is found in the cell membrane. The catalysed reaction is Na(+)(in) + 2 H(+)(out) = Na(+)(out) + 2 H(+)(in). Its function is as follows. Na(+)/H(+) antiporter that extrudes sodium in exchange for external protons. In Mycolicibacterium vanbaalenii (strain DSM 7251 / JCM 13017 / BCRC 16820 / KCTC 9966 / NRRL B-24157 / PYR-1) (Mycobacterium vanbaalenii), this protein is Na(+)/H(+) antiporter NhaA 2.